Here is an 807-residue protein sequence, read N- to C-terminus: MSTGQTIYHSLLKLPLSVMVKSTPIPSNPIEDLNIDIERPIIYALPFRSHVDLLTLQKSAKELGLPDPLSPIEIDGVSYPRYVFTSIGPKMFDTDDDLPQESLDLFKIVLKHHADNPDADFQLIPTSILWGRRPGKEGTSRPHLMPLNGPQKFVTLIKAGRDSTVRISPVVSLRYMADNHGADDAIAHKLARVAKIHFSRQKLAASGPNLPNRQALFNRLLKSQAIEKVILEEARIRNVDVEKVRKEAMGIMEEIATNFSYSLIKNGNRILKWLWNRLYQGLNINNAATVRKLAQEGHEIVYVPCHRSHMDYLLLSYVLYHEGLVPPHIAAGINLNFFPAGPIFRRGGAFFIRRSFKGNRLYSTIFREYLAELFAKGYSVEYFSEGGRSRTGRLLQAKTGMLAMTVQAMLRGLNRPVTLVPVYIGYEHVMEVTTYAKELQGKRKEKENAGQVLRTLRKLRNFGQGYVNFGEPISLNHYLNEHAPNWSESINPIEPQKPEWMSPVVNGIANKMMTHINDAVAANALTLCATALLAARQRALSKEDLTEQLDCYLQLLRNIPYSNTATVPTQDAEALLEHAIALDKFVIEKDTLGEIISLDRNQSILMTYYRNNIIHLFALPSLIAKLVVQYRSISIDNVQAQIQQIYPFLKAELFLHYDESELNDVVSQHIDELVRQKLIERENDVLQLNATNILKVHLLAHTISETLQRYAIALTHLQASPKLGKNDLEEQSQIMAQRLSRLHGINAPEFFDKGVFGILFNTLKAEGYLNSDGVAVISKVEPFSRDMSRLLNPEIKLTIQAVMTKED.

An HXXXXD motif motif is present at residues 305-310 (CHRSHM).

The protein belongs to the GPAT/DAPAT family.

Its subcellular location is the cell inner membrane. It catalyses the reaction sn-glycerol 3-phosphate + an acyl-CoA = a 1-acyl-sn-glycero-3-phosphate + CoA. It functions in the pathway phospholipid metabolism; CDP-diacylglycerol biosynthesis; CDP-diacylglycerol from sn-glycerol 3-phosphate: step 1/3. This is Glycerol-3-phosphate acyltransferase from Aliivibrio salmonicida (strain LFI1238) (Vibrio salmonicida (strain LFI1238)).